The following is a 151-amino-acid chain: Ribosome maturation factor RimP (151 aa).

The protein belongs to the RimP family.

It localises to the cytoplasm. Required for maturation of 30S ribosomal subunits. This chain is Ribosome maturation factor RimP, found in Vibrio atlanticus (strain LGP32) (Vibrio splendidus (strain Mel32)).